The following is a 534-amino-acid chain: Probable DNA ligase (534 aa).

Glutamate 213 provides a ligand contact to ATP. The N6-AMP-lysine intermediate role is filled by lysine 215. Positions 220, 235, 264, 303, 375, and 381 each coordinate ATP.

The protein belongs to the ATP-dependent DNA ligase family. Mg(2+) is required as a cofactor.

It carries out the reaction ATP + (deoxyribonucleotide)n-3'-hydroxyl + 5'-phospho-(deoxyribonucleotide)m = (deoxyribonucleotide)n+m + AMP + diphosphate.. DNA ligase that seals nicks in double-stranded DNA during DNA replication, DNA recombination and DNA repair. The protein is Probable DNA ligase of Mycolicibacterium vanbaalenii (strain DSM 7251 / JCM 13017 / BCRC 16820 / KCTC 9966 / NRRL B-24157 / PYR-1) (Mycobacterium vanbaalenii).